Consider the following 545-residue polypeptide: CTP synthase (545 aa).

An amidoligase domain region spans residues 1–265 (MSRFIFVTGG…DAIVVEKFGL (265 aa)). Position 13 (S13) interacts with CTP. S13 lines the UTP pocket. 14 to 19 (SLGKGI) is an ATP binding site. Y54 serves as a coordination point for L-glutamine. D71 is an ATP binding site. The Mg(2+) site is built by D71 and E139. Residues 146–148 (DIE), 186–191 (KTKPTQ), and K222 each bind CTP. UTP is bound by residues 186 to 191 (KTKPTQ) and K222. The Glutamine amidotransferase type-1 domain maps to 290–541 (TVGMVGKYIE…VAAALAEQKA (252 aa)). G351 serves as a coordination point for L-glutamine. Residue C378 is the Nucleophile; for glutamine hydrolysis of the active site. L-glutamine contacts are provided by residues 379–382 (LGMQ), E402, and R469. Catalysis depends on residues H514 and E516.

The protein belongs to the CTP synthase family. As to quaternary structure, homotetramer.

It carries out the reaction UTP + L-glutamine + ATP + H2O = CTP + L-glutamate + ADP + phosphate + 2 H(+). The enzyme catalyses L-glutamine + H2O = L-glutamate + NH4(+). It catalyses the reaction UTP + NH4(+) + ATP = CTP + ADP + phosphate + 2 H(+). It functions in the pathway pyrimidine metabolism; CTP biosynthesis via de novo pathway; CTP from UDP: step 2/2. Its activity is regulated as follows. Allosterically activated by GTP, when glutamine is the substrate; GTP has no effect on the reaction when ammonia is the substrate. The allosteric effector GTP functions by stabilizing the protein conformation that binds the tetrahedral intermediate(s) formed during glutamine hydrolysis. Inhibited by the product CTP, via allosteric rather than competitive inhibition. Its function is as follows. Catalyzes the ATP-dependent amination of UTP to CTP with either L-glutamine or ammonia as the source of nitrogen. Regulates intracellular CTP levels through interactions with the four ribonucleotide triphosphates. This chain is CTP synthase, found in Alcanivorax borkumensis (strain ATCC 700651 / DSM 11573 / NCIMB 13689 / SK2).